The following is a 292-amino-acid chain: Elongation factor Ts (292 aa).

An involved in Mg(2+) ion dislocation from EF-Tu region spans residues 81–84 (TDFV).

It belongs to the EF-Ts family.

Its subcellular location is the cytoplasm. Functionally, associates with the EF-Tu.GDP complex and induces the exchange of GDP to GTP. It remains bound to the aminoacyl-tRNA.EF-Tu.GTP complex up to the GTP hydrolysis stage on the ribosome. This chain is Elongation factor Ts, found in Acidithiobacillus ferrooxidans (strain ATCC 23270 / DSM 14882 / CIP 104768 / NCIMB 8455) (Ferrobacillus ferrooxidans (strain ATCC 23270)).